The following is a 378-amino-acid chain: Chorismate synthase (378 aa).

Arginine 49 is a binding site for NADP(+). Residues 126–128 (RAS), glycine 287, 302–306 (KPTAT), and arginine 328 each bind FMN.

The protein belongs to the chorismate synthase family. As to quaternary structure, homotetramer. Requires FMNH2 as cofactor.

It carries out the reaction 5-O-(1-carboxyvinyl)-3-phosphoshikimate = chorismate + phosphate. It functions in the pathway metabolic intermediate biosynthesis; chorismate biosynthesis; chorismate from D-erythrose 4-phosphate and phosphoenolpyruvate: step 7/7. Catalyzes the anti-1,4-elimination of the C-3 phosphate and the C-6 proR hydrogen from 5-enolpyruvylshikimate-3-phosphate (EPSP) to yield chorismate, which is the branch point compound that serves as the starting substrate for the three terminal pathways of aromatic amino acid biosynthesis. This reaction introduces a second double bond into the aromatic ring system. The protein is Chorismate synthase of Synechococcus sp. (strain JA-3-3Ab) (Cyanobacteria bacterium Yellowstone A-Prime).